The primary structure comprises 594 residues: Alpha-1,4-glucan:maltose-1-phosphate maltosyltransferase (594 aa).

A disordered region spans residues 244-270 (NRKGRNNSLTPGPDDPGSPYAIGSEEG). Lysine 246, glutamine 306, and aspartate 341 together coordinate alpha-maltose 1-phosphate. The active-site Nucleophile is the aspartate 377. Residue asparagine 378 coordinates alpha-maltose 1-phosphate. Catalysis depends on glutamate 406, which acts as the Proton donor. 517–518 (KY) contributes to the alpha-maltose 1-phosphate binding site.

It belongs to the glycosyl hydrolase 13 family. GlgE subfamily. Homodimer.

The catalysed reaction is alpha-maltose 1-phosphate + [(1-&gt;4)-alpha-D-glucosyl](n) = [(1-&gt;4)-alpha-D-glucosyl](n+2) + phosphate. In terms of biological role, maltosyltransferase that uses maltose 1-phosphate (M1P) as the sugar donor to elongate linear or branched alpha-(1-&gt;4)-glucans. Is involved in a branched alpha-glucan biosynthetic pathway from trehalose, together with TreS, Mak and GlgB. In Cereibacter sphaeroides (Rhodobacter sphaeroides), this protein is Alpha-1,4-glucan:maltose-1-phosphate maltosyltransferase.